Reading from the N-terminus, the 383-residue chain is Embryonic pepsinogen (383 aa).

The signal sequence occupies residues 1 to 16 (MRSLALLCAVLALSDG). Residues 76–380 (YYGTISIGTP…DRANNRVGLA (305 aa)) enclose the Peptidase A1 domain. Aspartate 94 is a catalytic residue. Cysteine 107 and cysteine 112 are joined by a disulfide. N-linked (GlcNAc...) asparagine glycosylation is found at asparagine 132 and asparagine 204. Cysteine 267 and cysteine 271 are oxidised to a cystine. The active site involves aspartate 276. Asparagine 309 carries N-linked (GlcNAc...) asparagine glycosylation. A disulfide bond links cysteine 310 and cysteine 344. Residue asparagine 350 is glycosylated (N-linked (GlcNAc...) asparagine).

This sequence belongs to the peptidase A1 family.

This is Embryonic pepsinogen from Gallus gallus (Chicken).